Reading from the N-terminus, the 376-residue chain is Multiphosphoryl transfer protein (376 aa).

The PTS EIIA type-2 domain maps to 2–142; the sequence is FQLSVQDIHP…EELRALLMGE (141 aa). Residue histidine 62 is the Tele-phosphohistidine intermediate; for EIIA activity of the active site. Position 62 is a phosphohistidine; by HPr (histidine 62). The interval 156–284 is m domain; that stretch reads TLDVIASSLV…LTSDDALTDD (129 aa). An HPr domain is found at 285-375; sequence VLSAEFVVRN…DAIAAGLGEG (91 aa). The active-site Pros-phosphohistidine intermediate; for HPr activity is the histidine 299. Position 299 is a phosphohistidine; by EI (histidine 299).

It is found in the cytoplasm. In terms of biological role, the phosphoenolpyruvate-dependent sugar phosphotransferase system (sugar PTS), a major carbohydrate active transport system, catalyzes the phosphorylation of incoming sugar substrates concomitantly with their translocation across the cell membrane. The enzyme II FruAB PTS system is involved in fructose transport. The sequence is that of Multiphosphoryl transfer protein (fruB) from Salmonella typhi.